Consider the following 906-residue polypeptide: Protein translocase subunit SecA (906 aa).

ATP contacts are provided by residues Gln-87, Gly-105–Thr-109, and Asp-513. Positions Gln-860–Asp-906 are disordered. Over residues Thr-876–Arg-886 the composition is skewed to basic and acidic residues. Positions 890, 892, 901, and 902 each coordinate Zn(2+). The span at Lys-896–Asp-906 shows a compositional bias: basic residues.

Belongs to the SecA family. As to quaternary structure, monomer and homodimer. Part of the essential Sec protein translocation apparatus which comprises SecA, SecYEG and auxiliary proteins SecDF-YajC and YidC. Requires Zn(2+) as cofactor.

The protein resides in the cell inner membrane. It is found in the cytoplasm. It carries out the reaction ATP + H2O + cellular proteinSide 1 = ADP + phosphate + cellular proteinSide 2.. Functionally, part of the Sec protein translocase complex. Interacts with the SecYEG preprotein conducting channel. Has a central role in coupling the hydrolysis of ATP to the transfer of proteins into and across the cell membrane, serving both as a receptor for the preprotein-SecB complex and as an ATP-driven molecular motor driving the stepwise translocation of polypeptide chains across the membrane. In Psychromonas ingrahamii (strain DSM 17664 / CCUG 51855 / 37), this protein is Protein translocase subunit SecA.